A 249-amino-acid chain; its full sequence is MEATFATAAAFQSIVGALRGLLTHATFDCDAHGMRLHSLDVERVALADLRLRRAGFARYACERKLSFSVPVRGLVKIVRTADPSAPLTMRVAARDDRVRLAYETARRAVSCTLAQISLDADRLGVPDKEYTCVLAVPSAELTRACADLARLGATTVEMSSGTTGLSFAAHADDGVRVRVLLRGSPQRPLTQAFACCYLNKLARASALSETVDVCMDASMPLRLRFRLGPLGALDLYLAPRVPSVGESAQ.

A DNA-binding region spans residues 60 to 79; the sequence is ACERKLSFSVPVRGLVKIVR.

This sequence belongs to the PCNA family.

In terms of biological role, sliding clamp subunit. Responsible for tethering the catalytic subunit of DNA polymerase to DNA during high-speed replication. The chain is Probable DNA polymerase sliding clamp (PCNA) from Orgyia pseudotsugata multicapsid polyhedrosis virus (OpMNPV).